We begin with the raw amino-acid sequence, 365 residues long: Glycerol dehydrogenase (365 aa).

5 residues coordinate NAD(+): Asp37, Gly94, Lys95, Thr116, and Ser119. Residue Asp121 participates in glycerol binding. NAD(+) is bound by residues Ser125, Leu127, and Tyr131. Zn(2+) contacts are provided by Asp171, His254, and His271. A glycerol-binding site is contributed by His254.

It belongs to the iron-containing alcohol dehydrogenase family. Zn(2+) serves as cofactor.

The catalysed reaction is glycerol + NAD(+) = dihydroxyacetone + NADH + H(+). It functions in the pathway polyol metabolism; glycerol fermentation; glycerone phosphate from glycerol (oxidative route): step 1/2. Functionally, catalyzes the NAD-dependent oxidation of glycerol to dihydroxyacetone (glycerone). Allows microorganisms to utilize glycerol as a source of carbon under anaerobic conditions. In Pseudomonas putida (Arthrobacter siderocapsulatus), this protein is Glycerol dehydrogenase (gldA).